Consider the following 349-residue polypeptide: MCAVLPQPKCVKLRALHSSCKFGVAARSCQELLRKGCIRFQLPVPGSRLCMYEDGTEVTDDCFPSLPNDSELLLLTAGETWHGYVSDITRLLSVFNEPHAGVIQAARQLLSDEQAPLRQKLLADLLHHVSQNITAETREQDPSWFEGLESRFRNKSGYLRYSCESRIRGYLREVSAYISMVDAAAREEYLRVLSSMCHKLKSVQYNGSYFDRGAEASSRLCTPEGWFSCQGPFDLESCLSKHSINPYGNRESRILFSTWNLDHIIEKKRTVVPTLAEAIQDGREVNWEYFYSLLFTAENLKLVHIACHKKTTHKLQCDRSRIYRPQTGSRRKQPPRKQPPRKRPPRKRQ.

Residues 7–83 (QPKCVKLRAL…LLTAGETWHG (77 aa)) enclose the CIDE-N domain. The segment at 319-349 (RSRIYRPQTGSRRKQPPRKQPPRKRPPRKRQ) is disordered. Positions 329–349 (SRRKQPPRKQPPRKRPPRKRQ) are enriched in basic residues.

Heterodimer of DFFA and DFFB. Interacts with H1-1.

It localises to the cytoplasm. It is found in the nucleus. Inhibited by DFFA (DFF45). Functionally, nuclease that induces DNA fragmentation and chromatin condensation during apoptosis. Degrades naked DNA and induces apoptotic morphology. The polypeptide is DNA fragmentation factor subunit beta (Dffb) (Rattus norvegicus (Rat)).